The sequence spans 60 residues: Cytotoxin 7 (60 aa).

4 cysteine pairs are disulfide-bonded: cysteine 3/cysteine 21, cysteine 14/cysteine 38, cysteine 42/cysteine 53, and cysteine 54/cysteine 59.

The protein belongs to the three-finger toxin family. Short-chain subfamily. Type IA cytotoxin sub-subfamily. Monomer in solution; Homodimer and oligomer in the presence of negatively charged lipids forming a pore with a size ranging between 20 and 30 Angstroms. As to expression, expressed by the venom gland.

It localises to the secreted. The protein resides in the target cell membrane. Its function is as follows. Shows cytolytic activity on many different cells by forming pore in lipid membranes. In vivo, increases heart rate or kills the animal by cardiac arrest. In addition, it binds to heparin with high affinity, interacts with Kv channel-interacting protein 1 (KCNIP1) in a calcium-independent manner, and binds to integrin alpha-V/beta-3 (ITGAV/ITGB3) with moderate affinity. Preferentially binds acidic phospholipids like phosphatidylserine, phosphatidic acid and phosphatidyl glycerol. Has hemolytic activity towards human erythrocytes (EC(50)=0.171 uM) and cytolytic activity towards various cell lines. The polypeptide is Cytotoxin 7 (Naja naja (Indian cobra)).